The primary structure comprises 207 residues: MTVMNLFFRPCQLQMGSGPLELMLKRPTQLTTFMNTRPGGSTQIRFISGNLDPVKRREDRLRKIFSKSRLLTRLNKNPKFSHYFDRLSEAGTVPTLTSFFILHEVTAILPLFLLWWLLYNLDLSDDFKLPNFLNGLMDSCHTAMEKFVGKRYQECLNKNKLILSGTVAYVTVKLLYPVRIFISIWGAPYFGKWLLLPFQKLKHLIKK.

Residues 1 to 46 (MTVMNLFFRPCQLQMGSGPLELMLKRPTQLTTFMNTRPGGSTQIRF) constitute a mitochondrion transit peptide. Residues 47-98 (ISGNLDPVKRREDRLRKIFSKSRLLTRLNKNPKFSHYFDRLSEAGTVPTLTS) lie on the Mitochondrial matrix side of the membrane. Residues 99 to 119 (FFILHEVTAILPLFLLWWLLY) form a helical membrane-spanning segment. At 120–177 (NLDLSDDFKLPNFLNGLMDSCHTAMEKFVGKRYQECLNKNKLILSGTVAYVTVKLLYP) the chain is on the mitochondrial intermembrane side. The chain crosses the membrane as a helical span at residues 178–198 (VRIFISIWGAPYFGKWLLLPF). Residues 199-207 (QKLKHLIKK) are Mitochondrial matrix-facing.

It belongs to the MRX11 family. As to quaternary structure, associates with the mitochondrial ribosome.

The protein localises to the mitochondrion. It localises to the mitochondrion inner membrane. Functionally, component of MIOREX complexes, large expressome-like assemblies of ribosomes with factors involved in all the steps of post-transcriptional gene expression. The chain is MIOREX complex component 11 from Saccharomyces cerevisiae (strain ATCC 204508 / S288c) (Baker's yeast).